Consider the following 180-residue polypeptide: Ribosome rescue factor SmrB (180 aa).

In terms of domain architecture, Smr spans 98–173; it reads LDLHGLTQLQ…GNAALLVLVA (76 aa).

Belongs to the SmrB family. As to quaternary structure, associates with collided ribosomes, but not with correctly translating polysomes.

Its function is as follows. Acts as a ribosome collision sensor. Detects stalled/collided disomes (pairs of ribosomes where the leading ribosome is stalled and a second ribosome has collided with it) and endonucleolytically cleaves mRNA at the 5' boundary of the stalled ribosome. Stalled/collided disomes form a new interface (primarily via the 30S subunits) that binds SmrB. Cleaved mRNA becomes available for tmRNA ligation, leading to ribosomal subunit dissociation and rescue of stalled ribosomes. This chain is Ribosome rescue factor SmrB, found in Pectobacterium atrosepticum (strain SCRI 1043 / ATCC BAA-672) (Erwinia carotovora subsp. atroseptica).